Consider the following 149-residue polypeptide: Transcriptional repressor NrdR (149 aa).

The segment at 3 to 34 (CPFCAAEETKVVDSRLAADGYQIRRRRECTSC) is a zinc-finger region. The region spanning 49-139 (PYVIKNNGNR…VYLSFDDIEE (91 aa)) is the ATP-cone domain.

It belongs to the NrdR family. The cofactor is Zn(2+).

In terms of biological role, negatively regulates transcription of bacterial ribonucleotide reductase nrd genes and operons by binding to NrdR-boxes. The polypeptide is Transcriptional repressor NrdR (Actinobacillus pleuropneumoniae serotype 3 (strain JL03)).